A 534-amino-acid polypeptide reads, in one-letter code: MKNQDQALIFEVSKEGRIGYSLPKLDVEEVKLEDVFESDYIRVEDAELPEVSELDIMRHYTALSNRNHGVDSGFYPLGSCTMKYNPKINESVARFAGFANIHPLQDEKTVQGAMELMYDLQEHLIEITGMDTVTLQPAAGAHGEWTGLMLIRAYHEANGDFNRTKVIVPDSAHGTNPASATVAGFETITVKSNENGLVDLEDLKRVVNEETAALMLTNPNTLGLFEENILEMAEIVHNAGGKLYYDGANLNAVLSQARPGDMGFDVVHLNLHKTFTGPHGGGGPGSGPVGVKADLIPYLPKPILEKTESGYHFNYDRPEAIGRVKPFYGNFGINVRAYTYIRSMGPDGLRAVTEYAVLNANYMMRRLAPFYDLPFDRHCKHEFVLSGRRQKKLGVRTLDIAKRLLDFGYHPPTIYFPLNVEECIMIEPTETESKETLDGFIDKMIQIAKEVEENPEVVQEAPHTTVIKRLDETMAARKTSFTLCKASSCTSLIRITKEELAEVGSFFVWRICPALTDSKLPTQNLAGAKKPGGR.

K273 bears the N6-(pyridoxal phosphate)lysine mark.

The protein belongs to the GcvP family. C-terminal subunit subfamily. As to quaternary structure, the glycine cleavage system is composed of four proteins: P, T, L and H. In this organism, the P 'protein' is a heterodimer of two subunits. The cofactor is pyridoxal 5'-phosphate.

It carries out the reaction N(6)-[(R)-lipoyl]-L-lysyl-[glycine-cleavage complex H protein] + glycine + H(+) = N(6)-[(R)-S(8)-aminomethyldihydrolipoyl]-L-lysyl-[glycine-cleavage complex H protein] + CO2. Functionally, the glycine cleavage system catalyzes the degradation of glycine. The P protein binds the alpha-amino group of glycine through its pyridoxal phosphate cofactor; CO(2) is released and the remaining methylamine moiety is then transferred to the lipoamide cofactor of the H protein. In Bacillus cereus (strain ATCC 14579 / DSM 31 / CCUG 7414 / JCM 2152 / NBRC 15305 / NCIMB 9373 / NCTC 2599 / NRRL B-3711), this protein is Probable glycine dehydrogenase (decarboxylating) subunit 2.